The chain runs to 534 residues: Nitrate/nitrite transporter NrtP (534 aa).

A run of 12 helical transmembrane segments spans residues 19 to 39, 52 to 72, 79 to 99, 109 to 129, 150 to 170, 195 to 215, 240 to 260, 266 to 286, 382 to 404, 409 to 431, 445 to 465, and 485 to 505; these read WFAF…ATTI, TIGL…GMLL, LTYS…ATAQ, LLMG…AEWF, AFSA…PGAF, AAIA…YFSV, DFWF…VLAW, NFLN…LYLF, WTMV…VAGT, IAVL…TFAI, GNVG…LLLL, and GFFQ…AFFL.

The protein belongs to the major facilitator superfamily. Nitrate/nitrite porter (TC 2.A.1.8) family.

It localises to the cell inner membrane. Its function is as follows. High-efficiency transport system for both nitrate and nitrite. The sequence is that of Nitrate/nitrite transporter NrtP from Picosynechococcus sp. (strain ATCC 27264 / PCC 7002 / PR-6) (Agmenellum quadruplicatum).